A 336-amino-acid chain; its full sequence is Terephthalate 1,2-dioxygenase, reductase component 2 (336 aa).

A 2Fe-2S ferredoxin-type domain is found at 3 to 91 (HQIHIHDSDI…DIRIHPSSFR (89 aa)). [2Fe-2S] cluster-binding residues include Cys37, Cys42, Cys45, and Cys75. The FAD-binding FR-type domain occupies 98 to 197 (RKRFTAKVYS…ELPFGSIALK (100 aa)).

In terms of assembly, monomer. Part of a multicomponent enzyme system composed of a reductase (TphA1I or TphA1II) and a two-subunit oxygenase component (TphA2I or TphA2II and TphA3I or TphA3II). FAD is required as a cofactor. The cofactor is [2Fe-2S] cluster.

The enzyme catalyses terephthalate + NADH + O2 + H(+) = (3S,4R)-3,4-dihydroxycyclohexa-1,5-diene-1,4-dicarboxylate + NAD(+). Its function is as follows. Component of the terephthalate 1,2-dioxygenase multicomponent enzyme system which catalyzes the dioxygenation of terephthalate (TER/TPA) to 1,2-dihydroxy-3,5-cyclohexadiene-1,4-dicarboxylic acid (DCD). TphA1 probably reduces TphA2A3. It can also use 2,5-dicarboxypyridine (PDC) and 1,4-napthalenedicarboxylic acid (NDC) as substrates, and preferentially uses NADPH which is the physiological electron donor. This is Terephthalate 1,2-dioxygenase, reductase component 2 (tphA1II) from Comamonas sp.